Consider the following 485-residue polypeptide: Glutamyl-tRNA(Gln) amidotransferase subunit A (485 aa).

Active-site charge relay system residues include Lys-78 and Ser-153. Ser-177 serves as the catalytic Acyl-ester intermediate.

Belongs to the amidase family. GatA subfamily. As to quaternary structure, heterotrimer of A, B and C subunits.

The catalysed reaction is L-glutamyl-tRNA(Gln) + L-glutamine + ATP + H2O = L-glutaminyl-tRNA(Gln) + L-glutamate + ADP + phosphate + H(+). In terms of biological role, allows the formation of correctly charged Gln-tRNA(Gln) through the transamidation of misacylated Glu-tRNA(Gln) in organisms which lack glutaminyl-tRNA synthetase. The reaction takes place in the presence of glutamine and ATP through an activated gamma-phospho-Glu-tRNA(Gln). The chain is Glutamyl-tRNA(Gln) amidotransferase subunit A from Lawsonia intracellularis (strain PHE/MN1-00).